The chain runs to 355 residues: Uroporphyrinogen decarboxylase (355 aa).

Substrate-binding positions include R27–R31, D77, Y154, T209, and H328.

This sequence belongs to the uroporphyrinogen decarboxylase family. Homodimer.

It is found in the cytoplasm. The enzyme catalyses uroporphyrinogen III + 4 H(+) = coproporphyrinogen III + 4 CO2. Its pathway is porphyrin-containing compound metabolism; protoporphyrin-IX biosynthesis; coproporphyrinogen-III from 5-aminolevulinate: step 4/4. In terms of biological role, catalyzes the decarboxylation of four acetate groups of uroporphyrinogen-III to yield coproporphyrinogen-III. The chain is Uroporphyrinogen decarboxylase from Photobacterium profundum (strain SS9).